Here is a 107-residue protein sequence, read N- to C-terminus: Acidic phospholipase A2 2 (107 aa).

6 disulfide bridges follow: cysteine 26-cysteine 100, cysteine 28-cysteine 38, cysteine 37-cysteine 82, cysteine 43-cysteine 107, cysteine 44-cysteine 75, and cysteine 62-cysteine 73. Ca(2+)-binding residues include tyrosine 27, glycine 29, and glycine 31. Histidine 41 is a catalytic residue. Aspartate 42 serves as a coordination point for Ca(2+). Aspartate 76 is an active-site residue.

It depends on Ca(2+) as a cofactor. Expressed by the venom gland.

It is found in the secreted. It catalyses the reaction a 1,2-diacyl-sn-glycero-3-phosphocholine + H2O = a 1-acyl-sn-glycero-3-phosphocholine + a fatty acid + H(+). Its function is as follows. PLA2 catalyzes the calcium-dependent hydrolysis of the 2-acyl groups in 3-sn-phosphoglycerides. This chain is Acidic phospholipase A2 2, found in Bothrops insularis (Golden lancehead).